Consider the following 262-residue polypeptide: tRNA pseudouridine synthase A (262 aa).

Asp51 functions as the Nucleophile in the catalytic mechanism. Tyr109 provides a ligand contact to substrate.

Belongs to the tRNA pseudouridine synthase TruA family. Homodimer.

The catalysed reaction is uridine(38/39/40) in tRNA = pseudouridine(38/39/40) in tRNA. In terms of biological role, formation of pseudouridine at positions 38, 39 and 40 in the anticodon stem and loop of transfer RNAs. This is tRNA pseudouridine synthase A from Actinobacillus pleuropneumoniae serotype 7 (strain AP76).